Reading from the N-terminus, the 757-residue chain is Receptor protein kinase-like protein At4g34220 (757 aa).

The first 26 residues, 1–26 (MTSNRSNLLFSLVLFHFLFVPTQLQA), serve as a signal peptide directing secretion. LRR repeat units lie at residues 104-126 (YLRI…VFNA), 128-150 (ELQS…VNSV), 152-174 (NLQL…ISLL), 176-198 (NLTV…FEAA), 199-219 (QILD…LGGK), 220-242 (SLHY…FAEK), and 245-267 (ANAT…LSLL). A helical membrane pass occupies residues 339-359 (IAAITVADIVGLAFIGLLVLY). Positions 471-753 (KASAYILGTT…KELVQVLEKI (283 aa)) constitute a Protein kinase domain. At serine 473 the chain carries Phosphoserine. Phosphothreonine is present on threonine 494. Serine 553 bears the Phosphoserine mark. Residues 633–654 (ARESHTTGPTSSSPYQPPEWST) form a disordered region. Residues threonine 638 and threonine 639 each carry the phosphothreonine modification. Over residues 638–654 (TTGPTSSSPYQPPEWST) the composition is skewed to polar residues.

This sequence belongs to the protein kinase superfamily.

It is found in the membrane. This Arabidopsis thaliana (Mouse-ear cress) protein is Receptor protein kinase-like protein At4g34220.